The primary structure comprises 425 residues: MATNNDFGAFIEKVTISPTSTSSSPPSLQGLTFAIKDIFDVEGRVTGFGNPDWLRTHSAATSTAPVVSSLLEAGATALGITIMDEMAYSINGENAHYGTPRNPIAFDRVPGGSSSGSAVAVAARLVDFSIGTDTGGSVRVPASYCGIFGFRPSHGAVSTVGLTPMAQSFDTVGWFARDTATLKRVGCVLLQQHHLNPIEPSQLIIADDCFKLCSVPHDLLVQPLVGSVEKSFGGNTVVKKVNLGEYIGQNVPSLKHFMTSDDVTTQQEFCIPSLMALSSSMRLLQRHEFKINHGAWISSVKPEFGPGISERIEEAIRTSDEKIDHCRSVKSELITALSTLLGEKGVLVIPTVPGPPPHLQANVAALESFRSRAFSLLSIAGVSGFCQVSIPLGLHENLPVSVSLVAKYGSDGFLLSLVDSLAAFI.

An N-acetylalanine modification is found at Ala-2. Catalysis depends on charge relay system residues Lys-36 and Ser-113. Ser-137 serves as the catalytic Acyl-ester intermediate.

This sequence belongs to the amidase family. Expressed in cotyledons, leaves and flower buds. Lower levels in roots, stems and siliques.

It localises to the cytoplasm. It is found in the nucleus. Its subcellular location is the nucleoplasm. The enzyme catalyses a monocarboxylic acid amide + H2O = a monocarboxylate + NH4(+). The catalysed reaction is indole-3-acetamide + H2O = (indol-3-yl)acetate + NH4(+). It catalyses the reaction 2-phenylacetamide + H2O = 2-phenylacetate + NH4(+). It carries out the reaction L-asparagine + H2O = L-aspartate + NH4(+). The enzyme catalyses 1-naphthaleneacetamide + H2O = 1-naphthaleneacetate + NH4(+). With respect to regulation, inhibited by phenylmethylsulfonyl fluoride (PMSF). Functionally, amidase involved in auxin biosynthesis. Converts indole-3-acetamide to indole-3-acetate. Converts phenyl-2-acetamide (PAM) to phenyl-2-acetate. Substrate preference is PAM &gt; IAM. Can also use L-asparagine and 1-naphtalene-acetamide as substrates, but not indole-3-acetonitrile or indole-3-acetyl-L-aspartic acid. This chain is Amidase 1, found in Arabidopsis thaliana (Mouse-ear cress).